The sequence spans 271 residues: MAPRALPGSAVLAAAVFVGGAVSSPLVAPDNGSSRTLHSRTETTPSPSNDTGNGHPEYIAYALVPVFFIMGLFGVLICHLLKKKGYRCTTEAEQDIEEEKVEKIELNDSVNENSDTVGQIVHYIMKNEANADVLKAMVADNSLYDPESPVTPSTPGSPPVSPGPLSPGGTPGKHVCGHHLHTVGGVVERDVCHRCRHKRWHFIKPTNKSRESRPRRQGEVTVLSVGRFRVTKVEHKSNQKERRSLMSVSGAETVNGEVPATPVKRERSGTE.

The first 23 residues, 1 to 23, serve as a signal peptide directing secretion; sequence MAPRALPGSAVLAAAVFVGGAVS. Over 24 to 57 the chain is Extracellular; sequence SPLVAPDNGSSRTLHSRTETTPSPSNDTGNGHPE. Residues 28 to 53 form a disordered region; it reads APDNGSSRTLHSRTETTPSPSNDTGN. N-linked (GlcNAc...) asparagine glycans are attached at residues Asn31 and Asn49. Positions 31–52 are enriched in polar residues; that stretch reads NGSSRTLHSRTETTPSPSNDTG. The helical transmembrane segment at 58-78 threads the bilayer; it reads YIAYALVPVFFIMGLFGVLIC. The Cytoplasmic segment spans residues 79–271; the sequence is HLLKKKGYRC…PVKRERSGTE (193 aa). The stretch at 89 to 113 forms a coiled coil; sequence TTEAEQDIEEEKVEKIELNDSVNEN. Residues Ser109 and Ser114 each carry the phosphoserine modification. 2 disordered regions span residues 145–173 and 233–271; these read DPES…TPGK and VEHK…SGTE. The segment covering 155–165 has biased composition (pro residues); the sequence is PGSPPVSPGPL. A compositionally biased stretch (basic and acidic residues) spans 233-244; that stretch reads VEHKSNQKERRS. Ser244 and Ser247 each carry phosphoserine.

This sequence belongs to the RELT family. As to quaternary structure, interacts with RELT, RELL2 and OXSR1. Interacts with PLSCR1. Phosphorylated in vitro by OXSR1. As to expression, widely expressed. Expressed at highest levels in the placenta, skeletal muscle, spleen and testis.

Its subcellular location is the cell membrane. In terms of biological role, induces activation of MAPK14/p38 cascade, when overexpressed. Induces apoptosis, when overexpressed. This Homo sapiens (Human) protein is RELT-like protein 1 (RELL1).